A 100-amino-acid polypeptide reads, in one-letter code: Aspartyl/glutamyl-tRNA(Asn/Gln) amidotransferase subunit C (100 aa).

It belongs to the GatC family. In terms of assembly, heterotrimer of A, B and C subunits.

It catalyses the reaction L-glutamyl-tRNA(Gln) + L-glutamine + ATP + H2O = L-glutaminyl-tRNA(Gln) + L-glutamate + ADP + phosphate + H(+). The enzyme catalyses L-aspartyl-tRNA(Asn) + L-glutamine + ATP + H2O = L-asparaginyl-tRNA(Asn) + L-glutamate + ADP + phosphate + 2 H(+). Functionally, allows the formation of correctly charged Asn-tRNA(Asn) or Gln-tRNA(Gln) through the transamidation of misacylated Asp-tRNA(Asn) or Glu-tRNA(Gln) in organisms which lack either or both of asparaginyl-tRNA or glutaminyl-tRNA synthetases. The reaction takes place in the presence of glutamine and ATP through an activated phospho-Asp-tRNA(Asn) or phospho-Glu-tRNA(Gln). The protein is Aspartyl/glutamyl-tRNA(Asn/Gln) amidotransferase subunit C of Streptococcus pneumoniae (strain JJA).